Consider the following 239-residue polypeptide: Large ribosomal subunit protein uL1 (239 aa).

Belongs to the universal ribosomal protein uL1 family. Part of the 50S ribosomal subunit.

Functionally, binds directly to 23S rRNA. The L1 stalk is quite mobile in the ribosome, and is involved in E site tRNA release. In terms of biological role, protein L1 is also a translational repressor protein, it controls the translation of the L11 operon by binding to its mRNA. The chain is Large ribosomal subunit protein uL1 from Rickettsia conorii (strain ATCC VR-613 / Malish 7).